The following is a 274-amino-acid chain: MGSSFKSPADTAKACSAIAELKEKAPLGKVIVLSFLAGAYIAFGGLLAEVVTGGMAKAGYPAGLVKLVFGAVFPVGLMLVVIAGSELFTGNCMYMPLGILDKRASIMGLIRNWVTSWVFNLVGAVFVAYFLAVATGILTADPWQAGALTVAKTKALGGASFIAAGKVTKSLTWAQAFWRAVGCNWLVCLAVYLAIASDDIIGKIWGIWFPIFAFVAIGFEHSVANMFFIPVGIFLGGVTWSQFFMNNLIPVTLGNIVGGAIFVACLYWYTYLKE.

Helical transmembrane passes span 31–51 (IVLS…AEVV), 62–82 (AGLV…LVVI), 118–138 (VFNL…TGIL), 176–196 (AFWR…LAIA), 200–220 (IIGK…IGFE), 226–246 (MFFI…FFMN), and 248–268 (LIPV…CLYW).

The protein belongs to the FNT transporter (TC 1.A.16) family.

Its subcellular location is the cell membrane. Functionally, may act as a formate transporter. In Methanothermobacter thermautotrophicus (Methanobacterium thermoformicicum), this protein is Probable formate transporter (fdhC).